Here is a 321-residue protein sequence, read N- to C-terminus: Ferredoxin--NADP reductase (321 aa).

The FAD site is built by Asp-34, Gln-42, Tyr-47, Val-87, Phe-119, Asp-278, and Thr-319.

It belongs to the ferredoxin--NADP reductase type 2 family. As to quaternary structure, homodimer. FAD serves as cofactor.

It catalyses the reaction 2 reduced [2Fe-2S]-[ferredoxin] + NADP(+) + H(+) = 2 oxidized [2Fe-2S]-[ferredoxin] + NADPH. This Streptococcus pneumoniae serotype 4 (strain ATCC BAA-334 / TIGR4) protein is Ferredoxin--NADP reductase.